We begin with the raw amino-acid sequence, 285 residues long: MTEKIILPSPAKLNLFLYITNKRADGYHELQTLFQFLDFGDDISLEVNESGEIELLNAIEGVAKEQNLIYRAAKLLQNHTACSKGAKIGVTKRLPMGGGVGGGSSNAATVLVGLNHFWQTGLSLEQLAELGLSLGADVPIFVRGFAAFAEGVGEKLVACQPRESWYVVLKPNVSISTAAVFQDPNLPRNTPKRTLSRLLSEEWTNDCEKVVRDHYFEVEDLIAELLQYATFRLTGTGACIFAEFESEAEAKAVFAHKPHNIFGFIAKGQNRSPLHQMLNLTTSPQ.

Residue Lys12 is part of the active site. Pro95 to Ser105 contacts ATP. Residue Asp137 is part of the active site.

Belongs to the GHMP kinase family. IspE subfamily.

The catalysed reaction is 4-CDP-2-C-methyl-D-erythritol + ATP = 4-CDP-2-C-methyl-D-erythritol 2-phosphate + ADP + H(+). Its pathway is isoprenoid biosynthesis; isopentenyl diphosphate biosynthesis via DXP pathway; isopentenyl diphosphate from 1-deoxy-D-xylulose 5-phosphate: step 3/6. Its function is as follows. Catalyzes the phosphorylation of the position 2 hydroxy group of 4-diphosphocytidyl-2C-methyl-D-erythritol. The polypeptide is 4-diphosphocytidyl-2-C-methyl-D-erythritol kinase (Actinobacillus pleuropneumoniae serotype 5b (strain L20)).